A 397-amino-acid polypeptide reads, in one-letter code: Phosphoglycerate kinase (397 aa).

Substrate contacts are provided by residues 21–23 (DFN), R36, 59–62 (HCGR), R118, and R151. Residues K201, E323, and 353 to 356 (GGDT) each bind ATP.

Belongs to the phosphoglycerate kinase family. In terms of assembly, monomer.

The protein resides in the cytoplasm. It carries out the reaction (2R)-3-phosphoglycerate + ATP = (2R)-3-phospho-glyceroyl phosphate + ADP. Its pathway is carbohydrate degradation; glycolysis; pyruvate from D-glyceraldehyde 3-phosphate: step 2/5. This chain is Phosphoglycerate kinase, found in Bartonella tribocorum (strain CIP 105476 / IBS 506).